The sequence spans 426 residues: MRVLFYVFPFVIFALSQAQLISVHVIFRHGARAPVLNVTSEEAKSYFYRGLGQLTDVCIEQAKLIGKVLKDRYVNTFVDARMLPTQLLFRSSPVERCLMTIQTVGNTMFVNSTPPVQTVAKPDDFLLVPKLDCAFQIDEWTNFFNLTENDKKQAKKNPWFISEKALRRATAASQTLQQRSDENLPALILEKDAGLAVPSWFNEEAYKESLTVFYKALAVMSSVGEYKSSKGIRVKTGLLLDKILNDIQEKVRCHEKNQKGHISCDRHKLQVFSTHDLLILPFLDALGIREAALGEDLPPKFLSAIIIETMLLDDIPFVKVFYRGDPRDITLRDMTGLVRNCPPNQALCPVNLFTSCCGEFITADPRRECYEEKADQQLHNWTMTTVSWILIGISAFLLIILIIMSYLAVRYKNRSVVTIKKVCLEN.

Residues methionine 1–alanine 18 form the signal peptide. Residues glutamine 19–tryptophan 388 lie on the Extracellular side of the membrane. Histidine 29 serves as the catalytic Nucleophile. N-linked (GlcNAc...) asparagine glycans are attached at residues asparagine 37 and asparagine 145. Cysteine 133 and cysteine 369 are oxidised to a cystine. Residue aspartate 276 is the Proton donor of the active site. A glycan (N-linked (GlcNAc...) asparagine) is linked at asparagine 380. The chain crosses the membrane as a helical span at residues isoleucine 389–valine 409. At arginine 410–asparagine 426 the chain is on the cytoplasmic side.

This sequence belongs to the histidine acid phosphatase family.

Its subcellular location is the membrane. It carries out the reaction a phosphate monoester + H2O = an alcohol + phosphate. In Caenorhabditis briggsae, this protein is Putative acid phosphatase 1.